The following is a 189-amino-acid chain: HTH-type transcriptional regulator Hpr (189 aa).

The HTH marR-type domain maps to 12–156 (ALLYSHKIVQ…ISAIVRRLYG (145 aa)). Residues 62 to 85 (ISEIAKYGVMHVSTAFNFSKKLED) constitute a DNA-binding region (H-T-H motif).

Homodimer.

Functionally, negative regulator of protease production and sporulation. In Exiguobacterium sibiricum (strain DSM 17290 / CCUG 55495 / CIP 109462 / JCM 13490 / 255-15), this protein is HTH-type transcriptional regulator Hpr.